We begin with the raw amino-acid sequence, 113 residues long: Hydrogenase maturation factor HypA (113 aa).

His2 contacts Ni(2+). Zn(2+)-binding residues include Cys73, Cys76, Cys89, and Cys92.

This sequence belongs to the HypA/HybF family.

Functionally, involved in the maturation of [NiFe] hydrogenases. Required for nickel insertion into the metal center of the hydrogenase. This Azorhizobium caulinodans (strain ATCC 43989 / DSM 5975 / JCM 20966 / LMG 6465 / NBRC 14845 / NCIMB 13405 / ORS 571) protein is Hydrogenase maturation factor HypA.